Consider the following 178-residue polypeptide: Large ribosomal subunit protein uL6 (178 aa).

The protein belongs to the universal ribosomal protein uL6 family. As to quaternary structure, part of the 50S ribosomal subunit.

Functionally, this protein binds to the 23S rRNA, and is important in its secondary structure. It is located near the subunit interface in the base of the L7/L12 stalk, and near the tRNA binding site of the peptidyltransferase center. This chain is Large ribosomal subunit protein uL6, found in Arthrobacter sp. (strain FB24).